The following is a 30-amino-acid chain: Protein Tat (30 aa).

The interval 1–30 (PLPTTRGNPTGPKESKKEVESKTETDPFAW) is disordered. The Cell attachment site motif lies at 6 to 8 (RGN). Over residues 13-30 (KESKKEVESKTETDPFAW) the composition is skewed to basic and acidic residues.

The protein belongs to the lentiviruses Tat family. In terms of assembly, interacts with host CCNT1. Associates with the P-TEFb complex composed at least of Tat, P-TEFb (CDK9 and CCNT1), TAR RNA, RNA Pol II. Recruits the HATs CREBBP, TAF1/TFIID, EP300, PCAF and GCN5L2. Interacts with host KAT5/Tip60; this interaction targets the latter to degradation. Interacts with the host deacetylase SIRT1. Interacts with host capping enzyme RNGTT; this interaction stimulates RNGTT. Binds to host KDR, and to the host integrins ITGAV/ITGB3 and ITGA5/ITGB1. Interacts with host KPNB1/importin beta-1 without previous binding to KPNA1/importin alpha-1. Interacts with EIF2AK2. Interacts with host nucleosome assembly protein NAP1L1; this interaction may be required for the transport of Tat within the nucleus, since the two proteins interact at the nuclear rim. Interacts with host C1QBP/SF2P32; this interaction involves lysine-acetylated Tat. Interacts with the host chemokine receptors CCR2, CCR3 and CXCR4. Interacts with host DPP4/CD26; this interaction may trigger an anti-proliferative effect. Interacts with host LDLR. Interacts with the host extracellular matrix metalloproteinase MMP1. Interacts with host PRMT6; this interaction mediates Tat's methylation. Interacts with, and is ubiquitinated by MDM2/Hdm2. Interacts with host PSMC3 and HTATIP2. Interacts with STAB1; this interaction may overcome SATB1-mediated repression of IL2 and IL2RA (interleukin) in T cells by binding to the same domain than HDAC1. Interacts (when acetylated on Lys-50 and Lys-51) with human CDK13, thereby increasing HIV-1 mRNA splicing and promoting the production of the doubly spliced HIV-1 protein Nef. In terms of processing, acetylation by EP300, CREBBP, GCN5L2/GCN5 and PCAF regulates the transactivation activity of Tat. EP300-mediated acetylation of Lys-50 promotes dissociation of Tat from the TAR RNA through the competitive binding to PCAF's bromodomain. In addition, the non-acetylated Tat's N-terminus can also interact with PCAF. PCAF-mediated acetylation of Lys-28 enhances Tat's binding to CCNT1. Lys-50 is deacetylated by SIRT1. Post-translationally, phosphorylated by EIF2AK2 on serine and threonine residues adjacent to the basic region important for TAR RNA binding and function. Phosphorylation of Tat by EIF2AK2 is dependent on the prior activation of EIF2AK2 by dsRNA. Asymmetrical arginine methylation by host PRMT6 seems to diminish the transactivation capacity of Tat and affects the interaction with host CCNT1. In terms of processing, polyubiquitination by MDM2 does not target Tat to degradation, but activates its transactivation function and fosters interaction with CCNT1 and TAR RNA.

Its subcellular location is the host nucleus. The protein resides in the host nucleolus. It localises to the host cytoplasm. The protein localises to the secreted. In terms of biological role, transcriptional activator that increases RNA Pol II processivity, thereby increasing the level of full-length viral transcripts. Recognizes a hairpin structure at the 5'-LTR of the nascent viral mRNAs referred to as the transactivation responsive RNA element (TAR) and recruits the cyclin T1-CDK9 complex (P-TEFb complex) that will in turn hyperphosphorylate the RNA polymerase II to allow efficient elongation. The CDK9 component of P-TEFb and other Tat-activated kinases hyperphosphorylate the C-terminus of RNA Pol II that becomes stabilized and much more processive. Other factors such as HTATSF1/Tat-SF1, SUPT5H/SPT5, and HTATIP2 are also important for Tat's function. Besides its effect on RNA Pol II processivity, Tat induces chromatin remodeling of proviral genes by recruiting the histone acetyltransferases (HATs) CREBBP, EP300 and PCAF to the chromatin. This also contributes to the increase in proviral transcription rate, especially when the provirus integrates in transcriptionally silent region of the host genome. To ensure maximal activation of the LTR, Tat mediates nuclear translocation of NF-kappa-B by interacting with host RELA. Through its interaction with host TBP, Tat may also modulate transcription initiation. Tat can reactivate a latently infected cell by penetrating in it and transactivating its LTR promoter. In the cytoplasm, Tat is thought to act as a translational activator of HIV-1 mRNAs. Its function is as follows. Extracellular circulating Tat can be endocytosed by surrounding uninfected cells via the binding to several surface receptors such as CD26, CXCR4, heparan sulfate proteoglycans (HSPG) or LDLR. Neurons are rarely infected, but they internalize Tat via their LDLR. Endosomal low pH allows Tat to cross the endosome membrane to enter the cytosol and eventually further translocate into the nucleus, thereby inducing severe cell dysfunctions ranging from cell activation to cell death. Through its interaction with nuclear HATs, Tat is potentially able to control the acetylation-dependent cellular gene expression. Tat seems to inhibit the HAT activity of KAT5/Tip60 and TAF1, and consequently modify the expression of specific cellular genes. Modulates the expression of many cellular genes involved in cell survival, proliferation or in coding for cytokines (such as IL10) or cytokine receptors. May be involved in the derepression of host interleukin IL2 expression. Mediates the activation of cyclin-dependent kinases and dysregulation of microtubule network. Tat plays a role in T-cell and neurons apoptosis. Tat induced neurotoxicity and apoptosis probably contribute to neuroAIDS. Host extracellular matrix metalloproteinase MMP1 cleaves Tat and decreases Tat's mediated neurotoxicity. Circulating Tat also acts as a chemokine-like and/or growth factor-like molecule that binds to specific receptors on the surface of the cells, affecting many cellular pathways. In the vascular system, Tat binds to ITGAV/ITGB3 and ITGA5/ITGB1 integrins dimers at the surface of endothelial cells and competes with bFGF for heparin-binding sites, leading to an excess of soluble bFGF. Binds to KDR/VEGFR-2. All these Tat-mediated effects enhance angiogenesis in Kaposi's sarcoma lesions. This is Protein Tat from Human immunodeficiency virus type 1 group M subtype A (isolate Z321) (HIV-1).